We begin with the raw amino-acid sequence, 955 residues long: 2-oxoglutarate dehydrogenase E1 component (955 aa).

The protein belongs to the alpha-ketoglutarate dehydrogenase family. In terms of assembly, homodimer. Part of the 2-oxoglutarate dehydrogenase (OGDH) complex composed of E1 (2-oxoglutarate dehydrogenase), E2 (dihydrolipoamide succinyltransferase) and E3 (dihydrolipoamide dehydrogenase); the complex contains multiple copies of the three enzymatic components (E1, E2 and E3). It depends on thiamine diphosphate as a cofactor.

It carries out the reaction N(6)-[(R)-lipoyl]-L-lysyl-[protein] + 2-oxoglutarate + H(+) = N(6)-[(R)-S(8)-succinyldihydrolipoyl]-L-lysyl-[protein] + CO2. In terms of biological role, E1 component of the 2-oxoglutarate dehydrogenase (OGDH) complex which catalyzes the decarboxylation of 2-oxoglutarate, the first step in the conversion of 2-oxoglutarate to succinyl-CoA and CO(2). This Bacillus cereus (strain 03BB102) protein is 2-oxoglutarate dehydrogenase E1 component.